Consider the following 461-residue polypeptide: Glutamyl-tRNA reductase (461 aa).

Substrate contacts are provided by residues T50–R53, S111, E116–Q118, and Q122. Catalysis depends on C51, which acts as the Nucleophile. G191–A196 lines the NADP(+) pocket.

The protein belongs to the glutamyl-tRNA reductase family. As to quaternary structure, homodimer.

It carries out the reaction (S)-4-amino-5-oxopentanoate + tRNA(Glu) + NADP(+) = L-glutamyl-tRNA(Glu) + NADPH + H(+). It participates in porphyrin-containing compound metabolism; protoporphyrin-IX biosynthesis; 5-aminolevulinate from L-glutamyl-tRNA(Glu): step 1/2. Functionally, catalyzes the NADPH-dependent reduction of glutamyl-tRNA(Glu) to glutamate 1-semialdehyde (GSA). The sequence is that of Glutamyl-tRNA reductase from Syntrophobacter fumaroxidans (strain DSM 10017 / MPOB).